Reading from the N-terminus, the 727-residue chain is MAAAVSTAPRAPLPAGAVSSSCCSSSSSSASMSRRWDPSPNPSSGSGSRLFLAARRGERLRVRRLAGAAPAPAPRRRVSSVVRCGGGGGGVRSPDDADAGSGERRRGWDALFHDAFQGAVRRWSEYVGSHWPLAPAGKDAGLGKRVESRREEQVRGEVEEEEGKWSWERWKQHFALIEESERLVDELQLQLRTAVYREDFRSAHKLKLAIAATSKNDTVGRAISDLNSAIEEERYMDATYIRDHAGAGLLGWWSGISGNLSDPYGLIIRISAEHGRYVAKSYDTRQLNSDGPGFPIFEIYFAEANGGYNLQAVHLKPDDSDSQQLSNTLREKLGMDSINISSSSFGAKHEDHNEGVNMDDQNSDDSDISAGPAGFKNLPSDSTPVPRVKILKVVPMENVNQDYIIKIFDQMSDEDDENDNPEDEIESSEDIGDGDNVEEAEAASAEDNVDESGDESDIEALISIDFITEDDKDFMSPSSTKAFERMPARLERRDRFSFSFYTEQYSKRQDVEKVQGISKEKVGLRTAQQDDDDLQFDRVKLVGSNRKLSVLQLGIKQHNNKVQQKLYGVTHFSRIQIPVSSDPLTGLYMTASGFDSEILSLQRKFGQWREDDSSEEHRDLQFYEYVEAVKLTGDNLVPAGQVVFRAKVGKHYQLPHKGIIPRELGVVARYKGERRIADPGFQNPRWVDGELLILDGKFIRDGPVIAFFYWTSNFHLFEFFRRLKLPD.

4 disordered regions span residues 1-51 (MAAA…SRLF), 65-102 (LAGA…AGSG), 340-381 (ISSS…LPSD), and 413-455 (DEDD…SGDE). Residues 1-83 (MAAAVSTAPR…PRRRVSSVVR (83 aa)) constitute a chloroplast transit peptide. Composition is skewed to low complexity over residues 19–33 (SSSC…ASMS) and 42–51 (PSSGSGSRLF). Acidic residues predominate over residues 413-441 (DEDDENDNPEDEIESSEDIGDGDNVEEAE).

The protein resides in the plastid. The protein localises to the chloroplast. Together with EX2, enables higher plants to perceive singlet oxygen as a stress signal in plastid that activates a genetically determined nuclear stress response program which triggers a programmed cell death (PCD). This transfer of singlet oxygen-induced stress-related signals from the plastid to the nucleus that triggers genetically controlled PCD pathway is unique to photosynthetic eukaryotes and operates under mild stress conditions, impeding photosystem II (PSII) without causing photooxidative damage of the plant. This Oryza sativa subsp. japonica (Rice) protein is Protein EXECUTER 1, chloroplastic.